A 309-amino-acid polypeptide reads, in one-letter code: GTP cyclohydrolase MptA (309 aa).

Belongs to the GTP cyclohydrolase IV family. As to quaternary structure, homodimer. It depends on Fe(2+) as a cofactor.

The enzyme catalyses GTP + H2O = 7,8-dihydroneopterin 2',3'-cyclic phosphate + formate + diphosphate + H(+). It functions in the pathway cofactor biosynthesis; 5,6,7,8-tetrahydromethanopterin biosynthesis. In terms of biological role, converts GTP to 7,8-dihydro-D-neopterin 2',3'-cyclic phosphate, the first intermediate in the biosynthesis of coenzyme methanopterin. The polypeptide is GTP cyclohydrolase MptA (Methanococcus aeolicus (strain ATCC BAA-1280 / DSM 17508 / OCM 812 / Nankai-3)).